The sequence spans 295 residues: Ribosomal protein L11 methyltransferase (295 aa).

4 residues coordinate S-adenosyl-L-methionine: Thr146, Gly167, Asp189, and Asn231.

It belongs to the methyltransferase superfamily. PrmA family.

The protein resides in the cytoplasm. It catalyses the reaction L-lysyl-[protein] + 3 S-adenosyl-L-methionine = N(6),N(6),N(6)-trimethyl-L-lysyl-[protein] + 3 S-adenosyl-L-homocysteine + 3 H(+). Methylates ribosomal protein L11. The protein is Ribosomal protein L11 methyltransferase of Vibrio vulnificus (strain CMCP6).